We begin with the raw amino-acid sequence, 439 residues long: Ribosomal protein uS12 methylthiotransferase RimO (439 aa).

Positions 5 to 115 constitute an MTTase N-terminal domain; the sequence is PRISFTSLGC…VLDAVHRALP (111 aa). [4Fe-4S] cluster is bound by residues C14, C50, C79, C146, C150, and C153. Residues 132-369 form the Radical SAM core domain; it reads LTPRHYAYLK…MARQQKISAR (238 aa). Residues 372-438 form the TRAM domain; it reads KRKVGTRQQI…QYDLHGSVAG (67 aa).

The protein belongs to the methylthiotransferase family. RimO subfamily. Requires [4Fe-4S] cluster as cofactor.

It is found in the cytoplasm. The enzyme catalyses L-aspartate(89)-[ribosomal protein uS12]-hydrogen + (sulfur carrier)-SH + AH2 + 2 S-adenosyl-L-methionine = 3-methylsulfanyl-L-aspartate(89)-[ribosomal protein uS12]-hydrogen + (sulfur carrier)-H + 5'-deoxyadenosine + L-methionine + A + S-adenosyl-L-homocysteine + 2 H(+). In terms of biological role, catalyzes the methylthiolation of an aspartic acid residue of ribosomal protein uS12. This chain is Ribosomal protein uS12 methylthiotransferase RimO, found in Bradyrhizobium diazoefficiens (strain JCM 10833 / BCRC 13528 / IAM 13628 / NBRC 14792 / USDA 110).